Reading from the N-terminus, the 450-residue chain is Tubulin alpha chain (450 aa).

Residue Gln11 coordinates GTP. Lys40 bears the N6-acetyllysine mark. Residues Glu71, Ser140, Gly144, Thr145, Thr179, Asn206, and Asn228 each contribute to the GTP site. Mg(2+) is bound at residue Glu71. Glu254 is a catalytic residue.

It belongs to the tubulin family. Dimer of alpha and beta chains. A typical microtubule is a hollow water-filled tube with an outer diameter of 25 nm and an inner diameter of 15 nM. Alpha-beta heterodimers associate head-to-tail to form protofilaments running lengthwise along the microtubule wall with the beta-tubulin subunit facing the microtubule plus end conferring a structural polarity. Microtubules usually have 13 protofilaments but different protofilament numbers can be found in some organisms and specialized cells. The cofactor is Mg(2+). Post-translationally, acetylation of alpha chains at Lys-40 stabilizes microtubules and affects affinity and processivity of microtubule motors. This modification has a role in multiple cellular functions, ranging from cell motility, cell cycle progression or cell differentiation to intracellular trafficking and signaling.

The protein resides in the cytoplasm. It is found in the cytoskeleton. It carries out the reaction GTP + H2O = GDP + phosphate + H(+). In terms of biological role, tubulin is the major constituent of microtubules, a cylinder consisting of laterally associated linear protofilaments composed of alpha- and beta-tubulin heterodimers. Microtubules grow by the addition of GTP-tubulin dimers to the microtubule end, where a stabilizing cap forms. Below the cap, tubulin dimers are in GDP-bound state, owing to GTPase activity of alpha-tubulin. The sequence is that of Tubulin alpha chain from Oxytricha granulifera (Ciliate).